We begin with the raw amino-acid sequence, 432 residues long: Phosphomevalonate kinase (432 aa).

Residues Lys-10 and 142–148 (VEKTGLG) each bind ATP.

It belongs to the GHMP kinase family. Mevalonate kinase subfamily.

It is found in the cytoplasm. It catalyses the reaction (R)-5-phosphomevalonate + ATP = (R)-5-diphosphomevalonate + ADP. It participates in isoprenoid biosynthesis; isopentenyl diphosphate biosynthesis via mevalonate pathway; isopentenyl diphosphate from (R)-mevalonate: step 2/3. Functionally, phosphomevalonate kinase; part of the second module of ergosterol biosynthesis pathway that includes the middle steps of the pathway. ERG8 converts 5-phosphomevalonate to 5-diphosphomevalonate. The second module is carried out in the vacuole and involves the formation of farnesyl diphosphate, which is also an important intermediate in the biosynthesis of ubiquinone, dolichol, heme and prenylated proteins. Activity by the mevalonate kinase ERG12 first converts mevalonate into 5-phosphomevalonate. 5-phosphomevalonate is then further converted to 5-diphosphomevalonate by the phosphomevalonate kinase ERG8. The diphosphomevalonate decarboxylase MVD then produces isopentenyl diphosphate. The isopentenyl-diphosphate delta-isomerase IDI1 then catalyzes the 1,3-allylic rearrangement of the homoallylic substrate isopentenyl (IPP) to its highly electrophilic allylic isomer, dimethylallyl diphosphate (DMAPP). Finally the farnesyl diphosphate synthase ERG20 catalyzes the sequential condensation of isopentenyl pyrophosphate with dimethylallyl pyrophosphate, and then with the resultant geranylpyrophosphate to the ultimate product farnesyl pyrophosphate. This is Phosphomevalonate kinase from Candida albicans (strain SC5314 / ATCC MYA-2876) (Yeast).